Here is a 295-residue protein sequence, read N- to C-terminus: Secreted frizzled-related protein 2 (295 aa).

The first 24 residues, 1-24 (MLQGPGSLLLLFLASHCCLGSARG), serve as a signal peptide directing secretion. One can recognise an FZ domain in the interval 35–155 (YKRSNCKPIP…PQDNDLCIPL (121 aa)). 8 disulfides stabilise this stretch: C40–C103, C50–C96, C87–C125, C114–C152, C118–C142, C172–C245, C175–C247, and C190–C295. Residues 172-295 (CEACKNKNDD…ISRSIRKLQC (124 aa)) form the NTR domain.

Belongs to the secreted frizzled-related protein (sFRP) family. As to expression, expressed in adipose tissue, heart, brain, skeletal muscle, pancreas, thymus, prostate, testis, ovary, small intestine and colon. Highest levels in adipose tissue, small intestine and colon.

Its subcellular location is the secreted. In terms of biological role, soluble frizzled-related proteins (sFRPS) function as modulators of Wnt signaling through direct interaction with Wnts. They have a role in regulating cell growth and differentiation in specific cell types. SFRP2 may be important for eye retinal development and for myogenesis. This Homo sapiens (Human) protein is Secreted frizzled-related protein 2 (SFRP2).